The following is a 686-amino-acid chain: Mannan-binding lectin serine protease 2 (686 aa).

The N-terminal stretch at 1–15 (MRLLTLLGLLCGSVA) is a signal peptide. One can recognise a CUB 1 domain in the interval 16–137 (TPLGPKWPEP…TGFEAFYAAE (122 aa)). The Ca(2+) site is built by Glu-67, Asp-75, Asp-120, Ser-122, Asn-123, Asp-138, Ile-139, and Glu-141. A disulfide bond links Cys-72 and Cys-90. Residues 138-181 (DIDECQVAPGEAPTCDHHCHNHLGGFYCSCRAGYVLHRNKRTCS) enclose the EGF-like; calcium-binding domain. 12 cysteine pairs are disulfide-bonded: Cys-142–Cys-156, Cys-152–Cys-165, Cys-167–Cys-180, Cys-184–Cys-211, Cys-241–Cys-259, Cys-300–Cys-348, Cys-328–Cys-361, Cys-366–Cys-412, Cys-396–Cys-430, Cys-434–Cys-552, Cys-598–Cys-618, and Cys-629–Cys-660. 3 residues coordinate Ca(2+): Asn-158, His-159, and Gly-162. Asn-158 bears the (3R)-3-hydroxyasparagine mark. In terms of domain architecture, CUB 2 spans 184–296 (CSGQVFTQRS…TGWKIHYTST (113 aa)). Sushi domains follow at residues 298–363 (QPCP…ACSI) and 364–432 (VDCG…VCEP). One can recognise a Peptidase S1 domain in the interval 445-684 (IYGGQKAKPG…YIPWIENIIS (240 aa)). Active-site charge relay system residues include His-483 and Asp-532. Ser-633 functions as the Charge relay system in the catalytic mechanism.

The protein belongs to the peptidase S1 family. In terms of assembly, homodimer; disulfide-linked. Binds MBL2. Isoform 2 binds to MASP1. Binds SERPING1. Dimerization and MBL2 binding requires calcium ions. In terms of processing, the iron and 2-oxoglutarate dependent 3-hydroxylation of aspartate and asparagine is (R) stereospecific within EGF domains. Post-translationally, activated by cleavage after Arg-444. The uncleaved zymogen is inactive towards synthetic substrates, but has sufficient activity to effect autocatalytic cleavage. Plasma.

Its subcellular location is the secreted. The enzyme catalyses Selective cleavage after Arg-223 in complement component C2 (-Ser-Leu-Gly-Arg-|-Lys-Ile-Gln-Ile) and after Arg-76 in complement component C4 (-Gly-Leu-Gln-Arg-|-Ala-Leu-Glu-Ile).. Functionally, serum protease that plays an important role in the activation of the complement system via mannose-binding lectin. After activation by auto-catalytic cleavage it cleaves C2 and C4, leading to their activation and to the formation of C3 convertase. The protein is Mannan-binding lectin serine protease 2 (MASP2) of Homo sapiens (Human).